The following is a 367-amino-acid chain: MAGSSYGNIFKVTTWGESHGKGLGVVVDGVPAGLELCEEDIQIFLNRRKPGQSKFTTPRKEDDTVEILSGVFEGKTTGTPVSMVVWNKNQKSKDYSEIASYYRPGHADFCFDEKYGFRDYRGGGRSSGRETIGRVAAGAIAVKMLSSLGIKFLTYTRSIGPVTINEVNFDAHEIYNNSLYMPDSDAAQKASEYLDECLKSLNSSGGVCECVITGLPVGLGDPVFEKIDANLAKAIMSIGAVKGFEIGDGFDAAKATGLTNNDAFIMMDGAVSKETNHSGGTLGGMTDGSPLIFRAAIKPTPSIAATQHTVNKSGEDIEISIKGRHDPIIVPRAVVVVEAMAAITIADALLMNMGARMDRITDFYKKL.

NADP(+) is bound at residue R48. Residues R125–S127, G283, K298–S302, and R324 contribute to the FMN site.

This sequence belongs to the chorismate synthase family. In terms of assembly, homotetramer. It depends on FMNH2 as a cofactor.

The catalysed reaction is 5-O-(1-carboxyvinyl)-3-phosphoshikimate = chorismate + phosphate. The protein operates within metabolic intermediate biosynthesis; chorismate biosynthesis; chorismate from D-erythrose 4-phosphate and phosphoenolpyruvate: step 7/7. Catalyzes the anti-1,4-elimination of the C-3 phosphate and the C-6 proR hydrogen from 5-enolpyruvylshikimate-3-phosphate (EPSP) to yield chorismate, which is the branch point compound that serves as the starting substrate for the three terminal pathways of aromatic amino acid biosynthesis. This reaction introduces a second double bond into the aromatic ring system. In Agathobacter rectalis (strain ATCC 33656 / DSM 3377 / JCM 17463 / KCTC 5835 / VPI 0990) (Eubacterium rectale), this protein is Chorismate synthase.